We begin with the raw amino-acid sequence, 407 residues long: Phosphoglycerate kinase (407 aa).

Residues 24–26 (DIN), arginine 39, 60–63 (HQSR), arginine 117, and arginine 157 contribute to the substrate site. Residues glutamate 330 and 355 to 358 (GGHI) contribute to the ATP site.

This sequence belongs to the phosphoglycerate kinase family.

It localises to the cytoplasm. The enzyme catalyses (2R)-3-phosphoglycerate + ATP = (2R)-3-phospho-glyceroyl phosphate + ADP. Its pathway is carbohydrate degradation; glycolysis; pyruvate from D-glyceraldehyde 3-phosphate: step 2/5. The polypeptide is Phosphoglycerate kinase (pgk) (Archaeoglobus fulgidus (strain ATCC 49558 / DSM 4304 / JCM 9628 / NBRC 100126 / VC-16)).